Here is a 695-residue protein sequence, read N- to C-terminus: Segment polarity protein dishevelled homolog DVL-1 (695 aa).

The DIX domain occupies 1 to 85; sequence MAETKIIYHM…RVVSWLVLAE (85 aa). The interval 89-236 is disordered; that stretch reads SDAGSQGTDS…RLRQTDRASS (148 aa). The span at 142–151 shows a compositional bias: basic residues; it reads SHRRERARRR. The span at 152–171 shows a compositional bias: basic and acidic residues; that stretch reads NRDEAARTNGHPRGDRRREL. Over residues 177-192 the composition is skewed to low complexity; the sequence is SASTVLSSELESSSFI. Phosphoserine is present on Ser-194. Residues 201–214 show a composition bias toward low complexity; it reads SRLSSSTEQSTSSR. Residues 215 to 228 show a composition bias toward basic residues; the sequence is LIRKHKCRRRKQRL. In terms of domain architecture, PDZ spans 251–323; sequence TVTLNMERHH…NDDAVRVLRE (73 aa). Positions 425 to 499 constitute a DEP domain; the sequence is PDSGLEIRDR…SEQCYYVFGD (75 aa). Over residues 551–580 the composition is skewed to low complexity; that stretch reads PAYQDPGFSYGSGSAGSQQSEGSKSSGSTR. Residues 551 to 641 are disordered; that stretch reads PAYQDPGFSY…SQASAVAPGL (91 aa). A compositionally biased stretch (polar residues) spans 622 to 635; it reads SQLSRGSSPRSQAS.

Belongs to the DSH family. Interacts with BRD7 and INVS. Interacts (via PDZ domain) with the VANGL1 and VANGL2 (via C-terminus). Interacts (via PDZ domain) with NXN. Interacts with CXXC4. Interacts with ARRB1; the interaction is enhanced by phosphorylation of DVL1. Interacts with CYLD. Interacts (via PDZ domain) with RYK. Self-associates (via DIX domain) and forms higher homooligomers. Interacts (via PDZ domain) with DACT1 and FZD7, where DACT1 and FZD7 compete for the same binding site. Interacts (via DEP domain) with MUSK; the interaction is direct and mediates the formation a DVL1, MUSK and PAK1 ternary complex involved in AChR clustering. Interacts (via PDZ domain) with TMEM88. Interacts with DCDC2. Interacts with FOXK2. Interacts with PKD1 (via extracellular domain). Interacts (via PDZ domain) with CCDC88C/DAPLE; competes with CCDC88C for binding to frizzled receptor FZD7 and dissociates from CCDC88C following initiation of non-canonical Wnt signaling when CCDC88C displaces DVL1 from ligand-activated FZD7. In terms of processing, ubiquitinated; undergoes both 'Lys-48'-linked ubiquitination, leading to its subsequent degradation by the ubiquitin-proteasome pathway, and 'Lys-63'-linked ubiquitination. The interaction with INVS is required for ubiquitination. Deubiquitinated by CYLD, which acts on 'Lys-63'-linked ubiquitin chains.

It localises to the cell membrane. The protein localises to the cytoplasm. The protein resides in the cytosol. It is found in the cytoplasmic vesicle. In terms of biological role, participates in Wnt signaling by binding to the cytoplasmic C-terminus of frizzled family members and transducing the Wnt signal to down-stream effectors. Plays a role both in canonical and non-canonical Wnt signaling. Plays a role in the signal transduction pathways mediated by multiple Wnt genes. Required for LEF1 activation upon WNT1 and WNT3A signaling. DVL1 and PAK1 form a ternary complex with MUSK which is important for MUSK-dependent regulation of AChR clustering during the formation of the neuromuscular junction (NMJ). This chain is Segment polarity protein dishevelled homolog DVL-1 (Dvl1), found in Rattus norvegicus (Rat).